A 567-amino-acid chain; its full sequence is Septation ring formation regulator EzrA (567 aa).

At 1 to 2 the chain is on the extracellular side; the sequence is ME. A helical membrane pass occupies residues 3-21; sequence IAVIVLLLLGGVMIYNHVY. Residues 22–567 are Cytoplasmic-facing; it reads RKKMYSEIDR…IFRDERSKEE (546 aa). 2 coiled-coil regions span residues 97–188 and 254–465; these read RYAK…LTAS and REIV…LEEK.

Belongs to the EzrA family.

The protein resides in the cell membrane. Its function is as follows. Negative regulator of FtsZ ring formation; modulates the frequency and position of FtsZ ring formation. Inhibits FtsZ ring formation at polar sites. Interacts either with FtsZ or with one of its binding partners to promote depolymerization. The polypeptide is Septation ring formation regulator EzrA (Geobacillus sp. (strain WCH70)).